A 1342-amino-acid chain; its full sequence is Subtilisin-like protease 2 (1342 aa).

The signal sequence occupies residues 1–18 (MLNIIYVVSLILIKFIFY). Residues 19–687 (KECNNNNNYY…KLYNNKYSFL (669 aa)) constitute a propeptide, inhibition peptide. Disordered stretches follow at residues 85-111 (EKKTKGEENEIEKKKENDLEEKKENEI) and 143-171 (ADVSNNDNSGHEENNKHKLNKKNSSNYKN). N-linked (GlcNAc...) asparagine glycosylation is found at Asn165, Asn343, Asn451, Asn455, and Asn493. A disordered region spans residues 415–474 (KKSKKEKENTQQKGGNNPNVDINILNNNNNNNNNNNNNSNNNSNSMNDEEINYNNNNNKE). Residues 430 to 474 (NNPNVDINILNNNNNNNNNNNNNSNNNSNSMNDEEINYNNNNNKE) are compositionally biased toward low complexity. The tract at residues 500-531 (IYHNKNDNSYKNKKEGTGKNNDNNDPNNNNNK) is disordered. Over residues 503–516 (NKNDNSYKNKKEGT) the composition is skewed to basic and acidic residues. Over residues 518-531 (KNNDNNDPNNNNNK) the composition is skewed to low complexity. Asn551, Asn642, and Asn729 each carry an N-linked (GlcNAc...) asparagine glycan. Residues 688 to 1137 (NKFLNIEPLI…LYNLYEYDSH (450 aa)) are Extracellular-facing. The Peptidase S8 domain occupies 727–1020 (TWNLSIIRVF…DSLVNAEGAV (294 aa)). Catalysis depends on charge relay system residues Asp755 and His798. N-linked (GlcNAc...) asparagine glycans are attached at residues Asn821, Asn857, Asn893, and Asn951. Ser961 serves as the catalytic Charge relay system. Residues Asn1010 and Asn1106 are each glycosylated (N-linked (GlcNAc...) asparagine). Residues 1138–1158 (YLLASVILFFLALLSIFVGMI) form a helical membrane-spanning segment. The Cytoplasmic portion of the chain corresponds to 1159–1342 (YMKSRKHSDK…MNQLDDMFMK (184 aa)).

The protein belongs to the peptidase S8 family. In terms of processing, proteolytically cleaved at the N-terminus to generate a 74kDa intermediate which is further processed into a 72kDa form. The first maturation cleavage is autocatalytic, occurs in the ER and is necessary for the subsequent SUB2 trafficking to the microneme. The second cleavage may be mediated by PMX/plasmepsin X.

The protein localises to the cell membrane. It localises to the cytoplasmic vesicle. The protein resides in the secretory vesicle. It is found in the microneme membrane. The catalysed reaction is Hydrolysis of proteins with broad specificity for peptide bonds, and a preference for a large uncharged residue in P1. Hydrolyzes peptide amides.. Its activity is regulated as follows. Activation may be calcium-dependent. Inhibited by the non-covalent interaction with the cleaved propeptide. Functionally, serine protease which plays an essential role in the shedding of AMA1, MSP1 and MSP7 from the surface of the invading merozoite; this step is essential for productive invasion and the release of the adhesion between the erythrocyte and the merozoite. May cleave TRAMP/PTTRAMP, thereby shedding TRAMP from the merozoite surface during erythrocyte invasion. This chain is Subtilisin-like protease 2, found in Plasmodium falciparum.